The chain runs to 334 residues: MDRTLIQEILEVVEQAAIASAHLTGLGKKDEADAAAVEAMRKRMGKIEMQGRIVIGEGERDEAPMLYIGEEVGSGSGPGVDFAVDPCEGTNLCANNQRGSMAVLAASDRGGLFNAPDFYMKKLAAPPSAKGKVDIRKSATENINILSQCLGLAVSELTIVVMDRARHKGLISEIRATGARVQPISDGDVQAAIACGFAGTGTHCLMGIGAAPEGVISAAAMRALGGHFQGQLVYDPAIAQTSEWADYTKEGNIARLNEMGITDVDKIYEAEELASGNNVVFAGSGITDGLLFHGVKFEPDCTRTSSLVISTLDNTARFTNTVHIKDGAKSIALS.

4 residues coordinate Mn(2+): aspartate 33, glutamate 57, aspartate 85, and glutamate 88. Substrate contacts are provided by residues 88-90, tyrosine 119, 164-166, and 186-188; these read EGT, RAR, and DGD. Glutamate 213 contacts Mn(2+).

This sequence belongs to the FBPase class 2 family. As to quaternary structure, homotetramer. Mn(2+) serves as cofactor.

It catalyses the reaction beta-D-fructose 1,6-bisphosphate + H2O = beta-D-fructose 6-phosphate + phosphate. It carries out the reaction D-sedoheptulose 1,7-bisphosphate + H2O = D-sedoheptulose 7-phosphate + phosphate. It participates in carbohydrate biosynthesis; Calvin cycle. Catalyzes the hydrolysis of fructose 1,6-bisphosphate (Fru 1,6-P2) and sedoheptulose 1,7-bisphosphate (Sed 1,7-P2) to fructose 6-phosphate and sedoheptulose 7-phosphate, respectively. The protein is D-fructose 1,6-bisphosphatase class 2/sedoheptulose 1,7-bisphosphatase of Prochlorococcus marinus (strain MIT 9303).